Here is a 98-residue protein sequence, read N- to C-terminus: MNKHFLFLFLLYCLIVAVTSLQCITCHLRTRTDRCRRGFGVCTAQKGEACMLLRIYQRNTLQISYMVCQKFCRDMTFDLRNRTYVHTCCNYNYCNFKL.

The N-terminal stretch at 1–20 (MNKHFLFLFLLYCLIVAVTS) is a signal peptide. One can recognise a UPAR/Ly6 domain in the interval 21–97 (LQCITCHLRT…CCNYNYCNFK (77 aa)). Disulfide bonds link C23–C50, C26–C35, C42–C68, and C72–C88.

Belongs to the PATE family. As to expression, specifically expressed in prostate and testis.

It is found in the secreted. This Homo sapiens (Human) protein is Prostate and testis expressed protein 3 (PATE3).